The primary structure comprises 258 residues: MLKTRIIPCLDVKDGRVVKGVQFLELRDAGDPVESAKAYDAAGADELCFLDITASHEARGTLLDVVSRTAEACFMPLTVGGGVRTVADVRTLLLAGADKVGINTAAVKNPDFVAEAAEKFGDQCIVVAIDAKRVSGPDEAARWEIFTHGGRNPTGIDAVEFARTVSERGAGELLVTSMDKDGTRSGYDLALTRAIADAVRVPVIASGGVGGLDDLVAGVRDGGASAVLAASIFHFGQHTVGEAKAHMAAAGLAMRLDP.

Catalysis depends on residues Asp-11 and Asp-130.

Belongs to the HisA/HisF family. Heterodimer of HisH and HisF.

Its subcellular location is the cytoplasm. It catalyses the reaction 5-[(5-phospho-1-deoxy-D-ribulos-1-ylimino)methylamino]-1-(5-phospho-beta-D-ribosyl)imidazole-4-carboxamide + L-glutamine = D-erythro-1-(imidazol-4-yl)glycerol 3-phosphate + 5-amino-1-(5-phospho-beta-D-ribosyl)imidazole-4-carboxamide + L-glutamate + H(+). It participates in amino-acid biosynthesis; L-histidine biosynthesis; L-histidine from 5-phospho-alpha-D-ribose 1-diphosphate: step 5/9. Functionally, IGPS catalyzes the conversion of PRFAR and glutamine to IGP, AICAR and glutamate. The HisF subunit catalyzes the cyclization activity that produces IGP and AICAR from PRFAR using the ammonia provided by the HisH subunit. This is Imidazole glycerol phosphate synthase subunit HisF from Methylorubrum extorquens (strain CM4 / NCIMB 13688) (Methylobacterium extorquens).